Here is a 333-residue protein sequence, read N- to C-terminus: GDP-fucose transporter 1 (333 aa).

The next 8 helical transmembrane spans lie at 13–33, 45–65, 95–115, 139–159, 169–189, 211–231, 239–259, and 293–313; these read SIKI…MVFL, APMF…FILG, LVFV…GVAF, TSMP…VGVN, MAGI…AIYI, AIFL…IAAS, YWFL…VSML, and TATW…YVLV.

This sequence belongs to the TPT transporter family. SLC35C subfamily.

The protein localises to the golgi apparatus membrane. The catalysed reaction is GMP(out) + GDP-beta-L-fucose(in) = GMP(in) + GDP-beta-L-fucose(out). Antiporter specific for GDP-l-fucose and depending on the concomitant reverse transport of GMP. Involved in GDP-fucose import from the cytoplasm into the Golgi lumen. The polypeptide is GDP-fucose transporter 1 (slc35c1) (Monosiga brevicollis (Choanoflagellate)).